A 305-amino-acid chain; its full sequence is Glutaminase (305 aa).

Positions 61, 113, 158, 165, 189, 241, and 259 each coordinate substrate.

Belongs to the glutaminase family. As to quaternary structure, homotetramer.

It catalyses the reaction L-glutamine + H2O = L-glutamate + NH4(+). This chain is Glutaminase, found in Alkaliphilus metalliredigens (strain QYMF).